The following is a 114-amino-acid chain: Fumarate reductase subunit D (114 aa).

Transmembrane regions (helical) follow at residues 27–47 (ICFP…LVPV), 50–70 (IVAF…TIFP), and 94–114 (WVFY…VIAL).

It belongs to the FrdD family. In terms of assembly, part of an enzyme complex containing four subunits: a flavoprotein (FrdA), an iron-sulfur protein (FrdB), and two hydrophobic anchor proteins (FrdC and FrdD).

The protein localises to the cell inner membrane. Functionally, anchors the catalytic components of the fumarate reductase complex to the cell membrane, binds quinones. This chain is Fumarate reductase subunit D, found in Actinobacillus pleuropneumoniae serotype 3 (strain JL03).